The sequence spans 501 residues: Glycerol kinase (501 aa).

Position 17 (threonine 17) interacts with ADP. ATP is bound by residues threonine 17, threonine 18, and serine 19. Threonine 17 contacts sn-glycerol 3-phosphate. Arginine 21 is an ADP binding site. 4 residues coordinate sn-glycerol 3-phosphate: arginine 87, glutamate 88, tyrosine 139, and aspartate 243. Glycerol is bound by residues arginine 87, glutamate 88, tyrosine 139, aspartate 243, and glutamine 244. Threonine 265 and glycine 308 together coordinate ADP. 4 residues coordinate ATP: threonine 265, glycine 308, glutamine 312, and glycine 409. Residues glycine 409 and asparagine 413 each contribute to the ADP site.

This sequence belongs to the FGGY kinase family.

It catalyses the reaction glycerol + ATP = sn-glycerol 3-phosphate + ADP + H(+). Its pathway is polyol metabolism; glycerol degradation via glycerol kinase pathway; sn-glycerol 3-phosphate from glycerol: step 1/1. Its activity is regulated as follows. Inhibited by fructose 1,6-bisphosphate (FBP). Key enzyme in the regulation of glycerol uptake and metabolism. Catalyzes the phosphorylation of glycerol to yield sn-glycerol 3-phosphate. The polypeptide is Glycerol kinase (Pseudomonas syringae pv. tomato (strain ATCC BAA-871 / DC3000)).